We begin with the raw amino-acid sequence, 352 residues long: MKKIVFTGGGSAGHVTPNLAIIPYLKEDNWDISYIGSHQGIEKTIIEKEDIPYYSIASGKLRRYFDLKNIKDPFLVMKGVMDAYVRIRKLKPDVIFSKGGFVSVPVVIGGWLNRVPVLLHESDMTPGLANKIALRFASKIFVTFEEAAKHLPKEKVIYTGSPVREEVLKGNREKALAFLGFSRKKPVITIMGGSLGAKKINETVREALPELLRKYQIVHLCGKGNLDDSLQNKEGYRQFEYVHGELPDILAITDFVISRAGSNAIFEFLTLQKPMLLIPLSKFASRGDQILNAESFERQGYASVLYEEDVTVNSLIKHVEELSHNNEAYKTALKKYNGKEAIQTIIHHISEA.

Residues 11–13 (SAG), Arg164, Ser194, and Gln289 contribute to the UDP-N-acetyl-alpha-D-glucosamine site.

It belongs to the glycosyltransferase 28 family. MurG subfamily.

Its subcellular location is the cell membrane. It carries out the reaction di-trans,octa-cis-undecaprenyl diphospho-N-acetyl-alpha-D-muramoyl-L-alanyl-D-glutamyl-meso-2,6-diaminopimeloyl-D-alanyl-D-alanine + UDP-N-acetyl-alpha-D-glucosamine = di-trans,octa-cis-undecaprenyl diphospho-[N-acetyl-alpha-D-glucosaminyl-(1-&gt;4)]-N-acetyl-alpha-D-muramoyl-L-alanyl-D-glutamyl-meso-2,6-diaminopimeloyl-D-alanyl-D-alanine + UDP + H(+). The protein operates within cell wall biogenesis; peptidoglycan biosynthesis. Its function is as follows. Cell wall formation. Catalyzes the transfer of a GlcNAc subunit on undecaprenyl-pyrophosphoryl-MurNAc-pentapeptide (lipid intermediate I) to form undecaprenyl-pyrophosphoryl-MurNAc-(pentapeptide)GlcNAc (lipid intermediate II). The polypeptide is UDP-N-acetylglucosamine--N-acetylmuramyl-(pentapeptide) pyrophosphoryl-undecaprenol N-acetylglucosamine transferase 2 (Bacillus thuringiensis subsp. konkukian (strain 97-27)).